Consider the following 535-residue polypeptide: T-complex protein 1 subunit beta (535 aa).

Ala-2 carries the N-acetylalanine modification. Ser-3 bears the Phosphoserine mark. Lys-13 carries the post-translational modification N6-acetyllysine. ADP is bound at residue Gly-44. An ATP-binding site is contributed by Gly-44. Residue Asp-97 participates in Mg(2+) binding. ADP contacts are provided by Gly-98, Thr-99, Thr-100, Ser-101, Ser-168, and Ser-169. ATP-binding residues include Gly-98, Thr-99, and Thr-100. Lys-181 carries the post-translational modification N6-acetyllysine. A Glycyl lysine isopeptide (Lys-Gly) (interchain with G-Cter in SUMO2) cross-link involves residue Lys-248. Ser-260 is modified (phosphoserine). Thr-261 carries the post-translational modification Phosphothreonine. ADP is bound by residues Gly-410, Glu-495, and Lys-500. Residues Glu-495 and Lys-500 each coordinate ATP.

This sequence belongs to the TCP-1 chaperonin family. Component of the chaperonin-containing T-complex (TRiC), a hexadecamer composed of two identical back-to-back stacked rings enclosing a protein folding chamber. Each ring is made up of eight different subunits: TCP1/CCT1, CCT2, CCT3, CCT4, CCT5, CCT6A/CCT6, CCT7, CCT8. Interacts with PACRG. Interacts with FLCN. Interacts with DLEC1. Interacts with SVEP1. Post-translationally, the N-terminus is blocked.

Its subcellular location is the cytoplasm. It carries out the reaction ATP + H2O = ADP + phosphate + H(+). In terms of biological role, component of the chaperonin-containing T-complex (TRiC), a molecular chaperone complex that assists the folding of actin, tubulin and other proteins upon ATP hydrolysis. The TRiC complex mediates the folding of WRAP53/TCAB1, thereby regulating telomere maintenance. As part of the TRiC complex may play a role in the assembly of BBSome, a complex involved in ciliogenesis regulating transports vesicles to the cilia. This Mus musculus (Mouse) protein is T-complex protein 1 subunit beta (Cct2).